Consider the following 387-residue polypeptide: 2-deoxystreptamine glucosyltransferase (387 aa).

It belongs to the glycosyltransferase group 1 family.

The catalysed reaction is 2-deoxystreptamine + UDP-N-acetyl-alpha-D-glucosamine = 2'-N-acetylparomamine + UDP + H(+). The enzyme catalyses 2-deoxystreptamine + UDP-alpha-D-glucose = 2'-deamino-2'-hydroxyparomamine + UDP + H(+). It functions in the pathway antibiotic biosynthesis; kanamycin biosynthesis. Its function is as follows. Glycosyltransferase involved in the biosynthesis of kanamycin by mediating conversion of 2-deoxystreptamine (2-DOS) to 2'-N-acetylparomamine using UDP-alpha-D-glucose as sugar donor. Can also accept UDP-alpha-D-glucosamine, but with a much lower activity compared to UDP-alpha-D-glucose. The protein is 2-deoxystreptamine glucosyltransferase (kanF) of Streptomyces kanamyceticus.